The sequence spans 239 residues: Probable transcriptional regulatory protein lmo0369 (239 aa).

It belongs to the TACO1 family. YeeN subfamily.

It localises to the cytoplasm. In Listeria monocytogenes serovar 1/2a (strain ATCC BAA-679 / EGD-e), this protein is Probable transcriptional regulatory protein lmo0369.